Reading from the N-terminus, the 227-residue chain is PKHD-type hydroxylase BamMC406_4714 (227 aa).

The region spanning 78 to 178 (KVFPPLFNRY…RVASFFWIQS (101 aa)) is the Fe2OG dioxygenase domain. Fe cation is bound by residues histidine 96, aspartate 98, and histidine 159. Arginine 169 contributes to the 2-oxoglutarate binding site.

Fe(2+) is required as a cofactor. It depends on L-ascorbate as a cofactor.

This chain is PKHD-type hydroxylase BamMC406_4714, found in Burkholderia ambifaria (strain MC40-6).